Reading from the N-terminus, the 207-residue chain is Large ribosomal subunit protein uL4 (207 aa).

The tract at residues 44 to 77 is disordered; the sequence is LRQGTHKTKGRSEVRGGGRKPWRQKGTGRARQGS. Residues 60–71 are compositionally biased toward basic residues; it reads GGRKPWRQKGTG.

Belongs to the universal ribosomal protein uL4 family. As to quaternary structure, part of the 50S ribosomal subunit.

Its function is as follows. One of the primary rRNA binding proteins, this protein initially binds near the 5'-end of the 23S rRNA. It is important during the early stages of 50S assembly. It makes multiple contacts with different domains of the 23S rRNA in the assembled 50S subunit and ribosome. In terms of biological role, forms part of the polypeptide exit tunnel. The polypeptide is Large ribosomal subunit protein uL4 (Shouchella clausii (strain KSM-K16) (Alkalihalobacillus clausii)).